Reading from the N-terminus, the 85-residue chain is Kunitz-type serine protease inhibitor homolog beta-bungarotoxin B4 chain (85 aa).

Residues 1 to 24 form the signal peptide; the sequence is MSSGGLLLLLGLLTLCAELTPVSS. One can recognise a BPTI/Kunitz inhibitor domain in the interval 31–81; the sequence is CDKPPDTKICQTVVRAFYYKPSAKRCVQFRYGGCNGNGNHFKSDHLCRCEC. 3 disulfide bridges follow: Cys31-Cys81, Cys40-Cys64, and Cys56-Cys77.

It belongs to the venom Kunitz-type family. As to quaternary structure, heterodimer; disulfide-linked. The A chains have phospholipase A2 activity and the B chains show homology with the basic protease inhibitors. As to expression, expressed by the venom gland.

The protein resides in the secreted. In terms of biological role, beta-bungarotoxins are presynaptic neurotoxins of the venom. The B chain is homologous to venom basic protease inhibitors but has no protease inhibitor activity and blocks voltage-gated potassium channels (Kv). This Bungarus multicinctus (Many-banded krait) protein is Kunitz-type serine protease inhibitor homolog beta-bungarotoxin B4 chain.